Reading from the N-terminus, the 37-residue chain is Large ribosomal subunit protein bL36c (37 aa).

It belongs to the bacterial ribosomal protein bL36 family.

Its subcellular location is the plastid. The protein localises to the chloroplast. The polypeptide is Large ribosomal subunit protein bL36c (Jasminum nudiflorum (Winter jasmine)).